Reading from the N-terminus, the 448-residue chain is Deoxyguanosinetriphosphate triphosphohydrolase-like protein (448 aa).

A disordered region spans residues 1 to 26 (MQINSSWQERFLADPPREKDHRPPFR). Over residues 11-26 (FLADPPREKDHRPPFR) the composition is skewed to basic and acidic residues. Residues 59–272 (RLTHSLEVAQ…MELADDIAYA (214 aa)) form the HD domain.

The protein belongs to the dGTPase family. Type 2 subfamily.

The polypeptide is Deoxyguanosinetriphosphate triphosphohydrolase-like protein (Histophilus somni (strain 129Pt) (Haemophilus somnus)).